The sequence spans 193 residues: Bifunctional protein PyrR (193 aa).

Residues 57–58 (TR), arginine 98, 119–127 (DDVLYSGRS), arginine 152, and valine 176 each bind substrate. The PRPP-binding motif lies at 115–127 (VILVDDVLYSGRS).

This sequence belongs to the purine/pyrimidine phosphoribosyltransferase family. PyrR subfamily.

It catalyses the reaction UMP + diphosphate = 5-phospho-alpha-D-ribose 1-diphosphate + uracil. Functionally, regulates the transcription of the pyrimidine nucleotide (pyr) operon in response to exogenous pyrimidines. In terms of biological role, also displays a weak uracil phosphoribosyltransferase activity which is not physiologically significant. This chain is Bifunctional protein PyrR, found in Mycobacterium bovis (strain ATCC BAA-935 / AF2122/97).